The sequence spans 309 residues: MKNRTMFGEFILLGLTNQPELQVMIFIFLFLTYMLSILGNLTIITLTLLDPHLQTPMYFFLRNFSFLEISFTSIFIPRFLTSMTTGNKVISFAGCLTQYFFAIFLGATEFYLLASMSYDRYVAICKPLHYLTIMSSRVCIQLVFCSWLGGFLAILPPIILMTQVDFCVSNILNHYYCDYGPLVELACSDTSLLELMVILLAVVTLMVTLVLVTLSYTYIIRTILRIPSAQQRTKAFSTCSSHMIVISLSYGSCMFMYINPSAKEGGAFNKGIAVLITSVTPLLNPFIYTLRNQQVKQAFKDSVKKIVKL.

Over 1–23 the chain is Extracellular; that stretch reads MKNRTMFGEFILLGLTNQPELQV. The N-linked (GlcNAc...) asparagine glycan is linked to Asn3. A helical transmembrane segment spans residues 24-44; the sequence is MIFIFLFLTYMLSILGNLTII. Residues 45–52 are Cytoplasmic-facing; it reads TLTLLDPH. A helical transmembrane segment spans residues 53–73; the sequence is LQTPMYFFLRNFSFLEISFTS. Residues 74-97 lie on the Extracellular side of the membrane; it reads IFIPRFLTSMTTGNKVISFAGCLT. An intrachain disulfide couples Cys95 to Cys187. The helical transmembrane segment at 98-118 threads the bilayer; the sequence is QYFFAIFLGATEFYLLASMSY. Residues 119-137 lie on the Cytoplasmic side of the membrane; sequence DRYVAICKPLHYLTIMSSR. The chain crosses the membrane as a helical span at residues 138–158; that stretch reads VCIQLVFCSWLGGFLAILPPI. Over 159–195 the chain is Extracellular; sequence ILMTQVDFCVSNILNHYYCDYGPLVELACSDTSLLEL. A helical transmembrane segment spans residues 196 to 215; that stretch reads MVILLAVVTLMVTLVLVTLS. The Cytoplasmic segment spans residues 216 to 235; sequence YTYIIRTILRIPSAQQRTKA. The chain crosses the membrane as a helical span at residues 236-256; the sequence is FSTCSSHMIVISLSYGSCMFM. Topologically, residues 257–269 are extracellular; the sequence is YINPSAKEGGAFN. Residues 270–290 traverse the membrane as a helical segment; sequence KGIAVLITSVTPLLNPFIYTL. At 291–309 the chain is on the cytoplasmic side; the sequence is RNQQVKQAFKDSVKKIVKL.

The protein belongs to the G-protein coupled receptor 1 family.

It localises to the cell membrane. In terms of biological role, odorant receptor. In Homo sapiens (Human), this protein is Olfactory receptor 6C4 (OR6C4).